Consider the following 395-residue polypeptide: Bifunctional enzyme IspD/IspF (395 aa).

A 2-C-methyl-D-erythritol 4-phosphate cytidylyltransferase region spans residues 1-237 (MRTWVLLLAA…DANEPQVTVP (237 aa)). A 2-C-methyl-D-erythritol 2,4-cyclodiphosphate synthase region spans residues 238-395 (CVGWGYDVHR…AAVTGLRPMP (158 aa)). A divalent metal cation-binding residues include Asp-244 and His-246. Residues 244–246 (DVH) and 270–271 (HS) contribute to the 4-CDP-2-C-methyl-D-erythritol 2-phosphate site. His-278 contributes to the a divalent metal cation binding site. Residues 292–294 (DIG), 297–301 (FPDSD), 368–371 (TTEE), and Phe-375 contribute to the 4-CDP-2-C-methyl-D-erythritol 2-phosphate site.

It in the N-terminal section; belongs to the IspD/TarI cytidylyltransferase family. IspD subfamily. The protein in the C-terminal section; belongs to the IspF family. A divalent metal cation serves as cofactor.

The enzyme catalyses 2-C-methyl-D-erythritol 4-phosphate + CTP + H(+) = 4-CDP-2-C-methyl-D-erythritol + diphosphate. It carries out the reaction 4-CDP-2-C-methyl-D-erythritol 2-phosphate = 2-C-methyl-D-erythritol 2,4-cyclic diphosphate + CMP. The protein operates within isoprenoid biosynthesis; isopentenyl diphosphate biosynthesis via DXP pathway; isopentenyl diphosphate from 1-deoxy-D-xylulose 5-phosphate: step 2/6. Its pathway is isoprenoid biosynthesis; isopentenyl diphosphate biosynthesis via DXP pathway; isopentenyl diphosphate from 1-deoxy-D-xylulose 5-phosphate: step 4/6. Its function is as follows. Bifunctional enzyme that catalyzes the formation of 4-diphosphocytidyl-2-C-methyl-D-erythritol from CTP and 2-C-methyl-D-erythritol 4-phosphate (MEP) (IspD), and catalyzes the conversion of 4-diphosphocytidyl-2-C-methyl-D-erythritol 2-phosphate (CDP-ME2P) to 2-C-methyl-D-erythritol 2,4-cyclodiphosphate (ME-CPP) with a corresponding release of cytidine 5-monophosphate (CMP) (IspF). This Nitratidesulfovibrio vulgaris (strain ATCC 29579 / DSM 644 / CCUG 34227 / NCIMB 8303 / VKM B-1760 / Hildenborough) (Desulfovibrio vulgaris) protein is Bifunctional enzyme IspD/IspF.